The following is a 525-amino-acid chain: ESX-1 secretion-associated protein EspE (525 aa).

Disordered regions lie at residues 244-341 and 375-494; these read AVAG…PGAA and ALQA…APVH. A compositionally biased stretch (acidic residues) spans 248–258; the sequence is DADDTTADDTA. The segment covering 274-286 has biased composition (basic and acidic residues); sequence ETSKEDGQSRHEN. Residues 292–306 are compositionally biased toward gly residues; that stretch reads SGGGGGATSGGGGGA. Low complexity-rich tracts occupy residues 307 to 319, 332 to 341, and 375 to 397; these read PSSA…AGTP, TPTDAQPGAA, and ALQA…AAAP. Over residues 411-440 the composition is skewed to basic and acidic residues; the sequence is DPDAEGDKDSDKRDGEGKEDGTAPRDREST.

It is found in the cytoplasm. The chain is ESX-1 secretion-associated protein EspE from Mycolicibacterium smegmatis (strain ATCC 700084 / mc(2)155) (Mycobacterium smegmatis).